The primary structure comprises 297 residues: Ubiquinone biosynthesis protein COQ4, mitochondrial (297 aa).

Residues 1–54 (MLSSARARLPISLCSFSLPFARLPNTLSRYQETWQRLPGRTHPTRSIRTTPAYE) constitute a mitochondrion transit peptide. Residues His178, Asp179, His182, and Glu194 each coordinate Zn(2+).

It belongs to the COQ4 family. As to quaternary structure, component of a multi-subunit COQ enzyme complex, composed of at least COQ3, COQ4, COQ5, COQ6, COQ7 and COQ9. It depends on Zn(2+) as a cofactor.

It localises to the mitochondrion inner membrane. It catalyses the reaction a 4-hydroxy-3-methoxy-5-(all-trans-polyprenyl)benzoate + H(+) = a 2-methoxy-6-(all-trans-polyprenyl)phenol + CO2. It functions in the pathway cofactor biosynthesis; ubiquinone biosynthesis. Functionally, lyase that catalyzes the C1-decarboxylation of 4-hydroxy-3-methoxy-5-(all-trans-polyprenyl)benzoic acid into 2-methoxy-6-(all-trans-polyprenyl)phenol during ubiquinone biosynthesis. In Laccaria bicolor (strain S238N-H82 / ATCC MYA-4686) (Bicoloured deceiver), this protein is Ubiquinone biosynthesis protein COQ4, mitochondrial.